A 390-amino-acid chain; its full sequence is Phosphopentomutase (390 aa).

Residues Asp9, Asp283, His288, Asp324, His325, and His336 each coordinate Mn(2+).

Belongs to the phosphopentomutase family. It depends on Mn(2+) as a cofactor.

The protein localises to the cytoplasm. The enzyme catalyses 2-deoxy-alpha-D-ribose 1-phosphate = 2-deoxy-D-ribose 5-phosphate. It catalyses the reaction alpha-D-ribose 1-phosphate = D-ribose 5-phosphate. Its pathway is carbohydrate degradation; 2-deoxy-D-ribose 1-phosphate degradation; D-glyceraldehyde 3-phosphate and acetaldehyde from 2-deoxy-alpha-D-ribose 1-phosphate: step 1/2. Functionally, isomerase that catalyzes the conversion of deoxy-ribose 1-phosphate (dRib-1-P) and ribose 1-phosphate (Rib-1-P) to deoxy-ribose 5-phosphate (dRib-5-P) and ribose 5-phosphate (Rib-5-P), respectively. In Thermotoga petrophila (strain ATCC BAA-488 / DSM 13995 / JCM 10881 / RKU-1), this protein is Phosphopentomutase.